A 340-amino-acid polypeptide reads, in one-letter code: DNA-directed RNA polymerase subunit alpha (340 aa).

The segment at 1 to 238 (MVDPIVTKNW…EQLSIFINFD (238 aa)) is alpha N-terminal domain (alpha-NTD). An alpha C-terminal domain (alpha-CTD) region spans residues 255-340 (LNENLFRSVD…AAPQGGAPKV (86 aa)).

Belongs to the RNA polymerase alpha chain family. In terms of assembly, homodimer. The RNAP catalytic core consists of 2 alpha, 1 beta, 1 beta' and 1 omega subunit. When a sigma factor is associated with the core the holoenzyme is formed, which can initiate transcription.

The catalysed reaction is RNA(n) + a ribonucleoside 5'-triphosphate = RNA(n+1) + diphosphate. In terms of biological role, DNA-dependent RNA polymerase catalyzes the transcription of DNA into RNA using the four ribonucleoside triphosphates as substrates. This Anaeromyxobacter dehalogenans (strain 2CP-1 / ATCC BAA-258) protein is DNA-directed RNA polymerase subunit alpha.